The following is a 586-amino-acid chain: MDSVNSFKGYGKVDEAQDLALKKKTRKRLLLLSISVVVLIAVIIAAVVATVVHKNKNESTPSPPPELTPSTSLKAICSVTRFPESCISSISKLPSSNTTDPETLFKLSLKVIIDELDSISDLPEKLSKETEDERIKSALRVCGDLIEDALDRLNDTVSAIDDEEKKKTLSSSKIEDLKTWLSATVTDHETCFDSLDELKQNKTEYANSTITQNLKSAMSRSTEFTSNSLAIVSKILSALSDLGIPIHRRRRLMSHHHQQSVDFEKWARRRLLQTAGLKPDVTVAGDGTGDVLTVNEAVAKVPKKSLKMFVIYVKSGTYVENVVMDKSKWNVMIYGDGKGKTIISGSKNFVDGTPTYETATFAIQGKGFIMKDIGIINTAGAAKHQAVAFRSGSDFSVYYQCSFDGFQDTLYPHSNRQFYRDCDVTGTIDFIFGSAAVVFQGCKIMPRQPLSNQFNTITAQGKKDPNQSSGMSIQRCTISANGNVIAPTYLGRPWKEFSTTVIMETVIGAVVRPSGWMSWVSGVDPPASIVYGEYKNTGPGSDVTQRVKWAGYKPVMSDAEAAKFTVATLLHGADWIPATGVINQLS.

An N-terminal signal peptide occupies residues M1–A49. N57, N97, N154, N201, and N207 each carry an N-linked (GlcNAc...) asparagine glycan. The short motif at R250–M253 is the RRLM cleavage motif element. An RRLL cleavage motif motif is present at residues R269 to L272. Residues T355 and Q385 each contribute to the substrate site. D408 acts as the Proton donor in catalysis. Residues C422 and C442 are joined by a disulfide bond. D429 acts as the Nucleophile in catalysis. N466 carries an N-linked (GlcNAc...) asparagine glycan. Residues R492 and W494 each coordinate substrate.

This sequence in the N-terminal section; belongs to the PMEI family. The protein in the C-terminal section; belongs to the pectinesterase family. As to quaternary structure, interacts with SBT6.1. As to expression, expressed in siliques.

It localises to the secreted. Its subcellular location is the cell wall. It is found in the golgi apparatus membrane. The catalysed reaction is [(1-&gt;4)-alpha-D-galacturonosyl methyl ester](n) + n H2O = [(1-&gt;4)-alpha-D-galacturonosyl](n) + n methanol + n H(+). It participates in glycan metabolism; pectin degradation; 2-dehydro-3-deoxy-D-gluconate from pectin: step 1/5. Acts in the modification of cell walls via demethylesterification of cell wall pectin. Demethylates protein phosphatase 2A (PP2A) that have been reversibly carboxymethylated by LCMT1. Acts as a negative regulators of genes involved in salt stress response. The protein is Pectinesterase 1 (PME1) of Arabidopsis thaliana (Mouse-ear cress).